A 499-amino-acid polypeptide reads, in one-letter code: Probable cytosol aminopeptidase (499 aa).

Positions 264 and 269 each coordinate Mn(2+). Lys-276 is an active-site residue. 3 residues coordinate Mn(2+): Asp-287, Asp-346, and Glu-348. Arg-350 is a catalytic residue.

Belongs to the peptidase M17 family. It depends on Mn(2+) as a cofactor.

It is found in the cytoplasm. The enzyme catalyses Release of an N-terminal amino acid, Xaa-|-Yaa-, in which Xaa is preferably Leu, but may be other amino acids including Pro although not Arg or Lys, and Yaa may be Pro. Amino acid amides and methyl esters are also readily hydrolyzed, but rates on arylamides are exceedingly low.. It catalyses the reaction Release of an N-terminal amino acid, preferentially leucine, but not glutamic or aspartic acids.. Presumably involved in the processing and regular turnover of intracellular proteins. Catalyzes the removal of unsubstituted N-terminal amino acids from various peptides. This Rhodopseudomonas palustris (strain BisB18) protein is Probable cytosol aminopeptidase.